We begin with the raw amino-acid sequence, 152 residues long: Large ribosomal subunit protein bL9 (152 aa).

Belongs to the bacterial ribosomal protein bL9 family.

Its function is as follows. Binds to the 23S rRNA. This Synechococcus sp. (strain CC9311) protein is Large ribosomal subunit protein bL9.